The sequence spans 375 residues: Neuropeptide Y receptor type 4 (375 aa).

At 1–39 (MNTSHFLAPLFPGSLQGKNGTNPLDSPYNFSDGCQDSAE) the chain is on the extracellular side. Asn2, Asn19, and Asn29 each carry an N-linked (GlcNAc...) asparagine glycan. Residues 40–60 (LLAFIITTYSIETILGVLGNL) form a helical membrane-spanning segment. Residues 61–78 (CLIFVTTRQKEKSNVTNL) lie on the Cytoplasmic side of the membrane. The helical transmembrane segment at 79-99 (LIANLAFSDFLMCLICQPLTV) threads the bilayer. Topologically, residues 100 to 116 (TYTIMDYWIFGEVLCKM) are extracellular. Cys114 and Cys201 are oxidised to a cystine. The helical transmembrane segment at 117 to 137 (LTFIQCMSVTVSILSLVLVAL) threads the bilayer. The Cytoplasmic portion of the chain corresponds to 138–155 (ERHQLIINPTGWKPSIFQ). Residues 156 to 176 (AYLGIVVIWFVSCFLSLPFLA) traverse the membrane as a helical segment. Topologically, residues 177–211 (NSTLNDLFHYNHSKVVEFLEDKVVCFVSWSSDHHR) are extracellular. N-linked (GlcNAc...) asparagine glycosylation occurs at Asn187. The chain crosses the membrane as a helical span at residues 212 to 232 (LIYTTFLLLFQYCIPLAFILV). The Cytoplasmic segment spans residues 233 to 266 (CYIRIYQRLQRQKHVFHAHACSSRAGQMKRINSM). The helical transmembrane segment at 267 to 287 (LMTMVTAFAVLWLPLHVFNTL) threads the bilayer. Topologically, residues 288–301 (EDWYQEAIPACHGN) are extracellular. A helical transmembrane segment spans residues 302–322 (LIFLMCHLLAMASTCVNPFIY). The Cytoplasmic portion of the chain corresponds to 323-375 (GFLNINFKKDIKALVLTCHCRSPRGESEHLPLSTVHTDLSKGSMRMGSKSNFI). Residue Cys340 is the site of S-palmitoyl cysteine attachment.

The protein belongs to the G-protein coupled receptor 1 family. As to expression, heart, detected in small intestine.

It is found in the cell membrane. In terms of biological role, g protein-coupled receptor for PPY/pancreatic polypeptide/PP that is negatively coupled to cAMP. Has much lower affinity for the NPY/neuropeptide Y and PYY/peptide YY. In Mus musculus (Mouse), this protein is Neuropeptide Y receptor type 4 (Npy4r).